The chain runs to 176 residues: Cytochrome c oxidase subunit 5b-1, mitochondrial (176 aa).

Residues 1-55 constitute a mitochondrion transit peptide; that stretch reads MWRRIVSSQLKTLAADVVAASPRRSIAATTRPVGFYLAANRSAISASSFVIPRRF. Zn(2+) is bound by residues C122, C146, and C149. Residues 157–176 are disordered; the sequence is VVGPGGPPDGHGDEDDEHHH.

The protein belongs to the cytochrome c oxidase subunit 5B (TC 3.D.4.11) family.

It is found in the mitochondrion inner membrane. This protein is one of the nuclear-coded polypeptide chains of cytochrome c oxidase, the terminal oxidase in mitochondrial electron transport. This chain is Cytochrome c oxidase subunit 5b-1, mitochondrial (COX5B-1), found in Arabidopsis thaliana (Mouse-ear cress).